Reading from the N-terminus, the 251-residue chain is CDP-diacylglycerol pyrophosphatase (251 aa).

A helical transmembrane segment spans residues 4-24 (AGLLFLVMIVIAVVAAGIGYW).

This sequence belongs to the Cdh family.

It is found in the cell inner membrane. The catalysed reaction is a CDP-1,2-diacyl-sn-glycerol + H2O = a 1,2-diacyl-sn-glycero-3-phosphate + CMP + 2 H(+). It functions in the pathway phospholipid metabolism; CDP-diacylglycerol degradation; phosphatidate from CDP-diacylglycerol: step 1/1. The sequence is that of CDP-diacylglycerol pyrophosphatase from Shigella flexneri.